We begin with the raw amino-acid sequence, 402 residues long: ORC1-type DNA replication protein 17 (402 aa).

2 residues coordinate ATP: Y223 and R235.

It belongs to the CDC6/cdc18 family.

Functionally, involved in regulation of DNA replication. The sequence is that of ORC1-type DNA replication protein 17 (cdc6q) from Haloarcula marismortui (strain ATCC 43049 / DSM 3752 / JCM 8966 / VKM B-1809) (Halobacterium marismortui).